We begin with the raw amino-acid sequence, 311 residues long: 26S proteasome regulatory subunit RPN11 (311 aa).

The region spanning 32–167 (VYISSLALLK…IDAFRLISPA (136 aa)) is the MPN domain. 3 residues coordinate Zn(2+): H114, H116, and D127. The JAMM motif signature appears at 114–127 (HSHPGFGCWLSSVD).

The protein belongs to the peptidase M67A family.

Acts as a regulatory subunit of the 26 proteasome which is involved in the ATP-dependent degradation of ubiquitinated proteins. The chain is 26S proteasome regulatory subunit RPN11 (RPN11) from Eremothecium gossypii (strain ATCC 10895 / CBS 109.51 / FGSC 9923 / NRRL Y-1056) (Yeast).